Consider the following 246-residue polypeptide: Eukaryotic translation initiation factor 6 (246 aa).

It belongs to the eIF-6 family. In terms of assembly, monomer. Associates with the 60S ribosomal subunit.

It localises to the cytoplasm. Its subcellular location is the nucleus. The protein localises to the nucleolus. Functionally, binds to the 60S ribosomal subunit and prevents its association with the 40S ribosomal subunit to form the 80S initiation complex in the cytoplasm. May also be involved in ribosome biogenesis. Involved in miRNA-mediated gene silencing. The sequence is that of Eukaryotic translation initiation factor 6 from Caenorhabditis elegans.